The chain runs to 349 residues: 26S proteasome non-ATPase regulatory subunit 4 (349 aa).

The region spanning 5-188 (ATIVCLDNSE…LSDIILQSPI (184 aa)) is the VWFA domain. The UIM 1 domain maps to 204–223 (DTDPDLAMALKLSLEEEKQR). A compositionally biased stretch (basic and acidic residues) spans 219–234 (EEKQRQERERKAREEA). 2 disordered regions span residues 219-257 (EEKQRQERERKAREEANGGSTNSGTTTTTAPTESNMDVN) and 274-349 (TDKM…NEKK). The segment covering 235-253 (NGGSTNSGTTTTTAPTESN) has biased composition (low complexity). In terms of domain architecture, UIM 2 spans 259–278 (EDDPELAEALALSMATDKME). Positions 280–301 (QSSTTNTDSQPPQQQQQPPTDD) are enriched in low complexity. The segment covering 335-349 (LSKKDEDKDKDNEKK) has biased composition (basic and acidic residues).

This sequence belongs to the proteasome subunit S5A family. The 26S proteasome is composed of a core protease, known as the 20S proteasome, capped at one or both ends by the 19S regulatory complex (RC). The RC is composed of at least 18 different subunits in two subcomplexes, the base and the lid, which form the portions proximal and distal to the 20S proteolytic core, respectively.

In terms of biological role, binds and presumably selects ubiquitin-conjugates for destruction. The protein is 26S proteasome non-ATPase regulatory subunit 4 (psmD4) of Dictyostelium discoideum (Social amoeba).